The primary structure comprises 506 residues: Aldehyde dehydrogenase (506 aa).

218–224 (GFGLEAG) serves as a coordination point for NAD(+). Residues E262 and C301 contribute to the active site.

Belongs to the aldehyde dehydrogenase family.

The catalysed reaction is an aldehyde + NAD(+) + H2O = a carboxylate + NADH + 2 H(+). This Rhodospirillum rubrum (strain ATCC 11170 / ATH 1.1.1 / DSM 467 / LMG 4362 / NCIMB 8255 / S1) protein is Aldehyde dehydrogenase.